We begin with the raw amino-acid sequence, 406 residues long: 12S rRNA N(4)-cytidine methyltransferase METTL15 (406 aa).

The N-terminal 22 residues, Met-1–Gly-22, are a transit peptide targeting the mitochondrion. S-adenosyl-L-methionine-binding positions include Gly-100–His-102, Asp-119, Phe-146, Asp-169, and Gln-176. Ser-358 is subject to Phosphoserine.

Belongs to the methyltransferase superfamily. RsmH family.

It localises to the mitochondrion matrix. It catalyses the reaction cytidine(839) in 12S rRNA + S-adenosyl-L-methionine = N(4)-methylcytidine(839) in 12S rRNA + S-adenosyl-L-homocysteine + H(+). Functionally, N4-methylcytidine (m4C) methyltransferase responsible for the methylation of position C839 in mitochondrial 12S rRNA. Involved in the stabilization of 12S rRNA folding, therefore facilitating the assembly of the mitochondrial small ribosomal subunits. The protein is 12S rRNA N(4)-cytidine methyltransferase METTL15 of Mus musculus (Mouse).